Here is a 635-residue protein sequence, read N- to C-terminus: Sulfite reductase [ferredoxin], chloroplastic (635 aa).

The transit peptide at 1–50 directs the protein to the chloroplast; the sequence is MSGAIGGAEVHGFRGAAAQLPRSRVLGRPIRVAPPAAARPGGASAGSIRA. Disordered regions lie at residues 31-50 and 245-267; these read RVAP…SIRA and PEVT…PEPI. Over residues 245 to 254 the composition is skewed to basic and acidic residues; it reads PEVTKARNDN. The [4Fe-4S] cluster site is built by C494, C500, C540, and C544. Residue C544 participates in siroheme binding.

The protein belongs to the nitrite and sulfite reductase 4Fe-4S domain family. Monomer. Interacts with ferredoxin. Siroheme is required as a cofactor. Requires [4Fe-4S] cluster as cofactor. In terms of processing, phosphorylated; this phosphorylation reduces DNA-binding. In terms of tissue distribution, present in roots and leaves (at protein level). In leaves, sulfite reductase activity is detected in both bundle sheath and mesophyll cell types.

Its subcellular location is the plastid. It is found in the chloroplast stroma. It localises to the chloroplast nucleoid. The protein resides in the plastid stroma. The enzyme catalyses hydrogen sulfide + 6 oxidized [2Fe-2S]-[ferredoxin] + 3 H2O = sulfite + 6 reduced [2Fe-2S]-[ferredoxin] + 7 H(+). Its activity is regulated as follows. Inhibited by the tryptophan-modifying reagent, N-bromosuccinimide (NBS), by the lysine-modifying reagent, N-acetylsuccinimide and by the arginine-modifying reagent, phenylglyoxal. Complex formation with ferredoxin prevents these inhibitions. Essential protein with sulfite reductase activity required in assimilatory sulfate reduction pathway during both primary and secondary metabolism and thus involved in development and growth. Its function is as follows. DNA-binding protein that binds to both double-stranded and single-stranded DNA without significant sequence specificity to reversibly repress the transcriptional activity of chloroplast nucleoids by promoting DNA compaction and possibly regulate DNA replication. This chain is Sulfite reductase [ferredoxin], chloroplastic (SIR), found in Zea mays (Maize).